Consider the following 465-residue polypeptide: Glutamate--tRNA ligase 1 (465 aa).

Residues 8 to 18 carry the 'HIGH' region motif; the sequence is PSPTGLMHLGN. Residues 249 to 253 carry the 'KMSKS' region motif; that stretch reads PLSKR. Lys-252 contacts ATP.

Belongs to the class-I aminoacyl-tRNA synthetase family. Glutamate--tRNA ligase type 1 subfamily. As to quaternary structure, monomer.

The protein localises to the cytoplasm. The enzyme catalyses tRNA(Glu) + L-glutamate + ATP = L-glutamyl-tRNA(Glu) + AMP + diphosphate. Catalyzes the attachment of glutamate to tRNA(Glu) in a two-step reaction: glutamate is first activated by ATP to form Glu-AMP and then transferred to the acceptor end of tRNA(Glu). This Coxiella burnetii (strain CbuG_Q212) (Coxiella burnetii (strain Q212)) protein is Glutamate--tRNA ligase 1.